A 205-amino-acid chain; its full sequence is Small ribosomal subunit protein uS2 (205 aa).

This sequence belongs to the universal ribosomal protein uS2 family.

The protein is Small ribosomal subunit protein uS2 (rps2) of Aeropyrum pernix (strain ATCC 700893 / DSM 11879 / JCM 9820 / NBRC 100138 / K1).